A 212-amino-acid polypeptide reads, in one-letter code: Dephospho-CoA kinase (212 aa).

A DPCK domain is found at 4-204 (IVALTGGICS…RDYLKAEKTT (201 aa)). An ATP-binding site is contributed by 12-17 (CSGKSV).

This sequence belongs to the CoaE family.

It is found in the cytoplasm. It carries out the reaction 3'-dephospho-CoA + ATP = ADP + CoA + H(+). The protein operates within cofactor biosynthesis; coenzyme A biosynthesis; CoA from (R)-pantothenate: step 5/5. Its function is as follows. Catalyzes the phosphorylation of the 3'-hydroxyl group of dephosphocoenzyme A to form coenzyme A. This Blochmanniella pennsylvanica (strain BPEN) protein is Dephospho-CoA kinase.